A 265-amino-acid polypeptide reads, in one-letter code: Auxin-responsive protein IAA22 (265 aa).

Disordered regions lie at residues 54-88 (LSTPKPADADDLMNKMKPCSDEGHGSRDAAQERRP) and 172-199 (DGREAGSGRRPAAGVDQVSERPDVSPAM). The span at 65–88 (LMNKMKPCSDEGHGSRDAAQERRP) shows a compositional bias: basic and acidic residues. The PB1 domain occupies 91–194 (TMFVKVNLEG…GVDQVSERPD (104 aa)).

Belongs to the Aux/IAA family. In terms of assembly, homodimers and heterodimers. In terms of tissue distribution, highly expressed in flowers. Expressed in roots and seedlings.

The protein localises to the nucleus. Functionally, aux/IAA proteins are short-lived transcriptional factors that function as repressors of early auxin response genes at low auxin concentrations. The sequence is that of Auxin-responsive protein IAA22 (IAA22) from Oryza sativa subsp. japonica (Rice).